The primary structure comprises 414 residues: Glutamyl-tRNA reductase (414 aa).

Residues 49 to 52 (TCNR), serine 108, 113 to 115 (EPQ), and glutamine 119 contribute to the substrate site. Cysteine 50 (nucleophile) is an active-site residue. NADP(+) is bound at residue 188–193 (GAGQTG).

The protein belongs to the glutamyl-tRNA reductase family. As to quaternary structure, homodimer.

It catalyses the reaction (S)-4-amino-5-oxopentanoate + tRNA(Glu) + NADP(+) = L-glutamyl-tRNA(Glu) + NADPH + H(+). It participates in porphyrin-containing compound metabolism; protoporphyrin-IX biosynthesis; 5-aminolevulinate from L-glutamyl-tRNA(Glu): step 1/2. In terms of biological role, catalyzes the NADPH-dependent reduction of glutamyl-tRNA(Glu) to glutamate 1-semialdehyde (GSA). The polypeptide is Glutamyl-tRNA reductase (Francisella tularensis subsp. holarctica (strain FTNF002-00 / FTA)).